Here is a 259-residue protein sequence, read N- to C-terminus: Ubiquinone/menaquinone biosynthesis C-methyltransferase UbiE (259 aa).

S-adenosyl-L-methionine contacts are provided by residues T82, D103, and 131–132 (NA).

This sequence belongs to the class I-like SAM-binding methyltransferase superfamily. MenG/UbiE family.

It carries out the reaction a 2-demethylmenaquinol + S-adenosyl-L-methionine = a menaquinol + S-adenosyl-L-homocysteine + H(+). The enzyme catalyses a 2-methoxy-6-(all-trans-polyprenyl)benzene-1,4-diol + S-adenosyl-L-methionine = a 5-methoxy-2-methyl-3-(all-trans-polyprenyl)benzene-1,4-diol + S-adenosyl-L-homocysteine + H(+). Its pathway is quinol/quinone metabolism; menaquinone biosynthesis; menaquinol from 1,4-dihydroxy-2-naphthoate: step 2/2. It participates in cofactor biosynthesis; ubiquinone biosynthesis. Methyltransferase required for the conversion of demethylmenaquinol (DMKH2) to menaquinol (MKH2) and the conversion of 2-polyprenyl-6-methoxy-1,4-benzoquinol (DDMQH2) to 2-polyprenyl-3-methyl-6-methoxy-1,4-benzoquinol (DMQH2). The polypeptide is Ubiquinone/menaquinone biosynthesis C-methyltransferase UbiE (Agrobacterium fabrum (strain C58 / ATCC 33970) (Agrobacterium tumefaciens (strain C58))).